Here is a 38-residue protein sequence, read N- to C-terminus: MKVRASVKPRCEYCKVIKRKGVIRVICSRTPKHKQRQG.

This sequence belongs to the bacterial ribosomal protein bL36 family.

The sequence is that of Large ribosomal subunit protein bL36 from Chloroflexus aurantiacus (strain ATCC 29366 / DSM 635 / J-10-fl).